Consider the following 590-residue polypeptide: Probable indole-3-acetic acid-amido synthetase GH3.1 (590 aa).

It belongs to the IAA-amido conjugating enzyme family.

Catalyzes the synthesis of indole-3-acetic acid (IAA)-amino acid conjugates, providing a mechanism for the plant to cope with the presence of excess auxin. The protein is Probable indole-3-acetic acid-amido synthetase GH3.1 (GH3.1) of Arabidopsis thaliana (Mouse-ear cress).